Reading from the N-terminus, the 251-residue chain is 2,3-bisphosphoglycerate-dependent phosphoglycerate mutase (251 aa).

Residues 11–18 (RHGESDWN), 24–25 (TG), Arg-63, 90–93 (ERHY), Lys-101, 117–118 (RR), and 184–185 (GN) each bind substrate. His-12 acts as the Tele-phosphohistidine intermediate in catalysis. Glu-90 acts as the Proton donor/acceptor in catalysis.

The protein belongs to the phosphoglycerate mutase family. BPG-dependent PGAM subfamily.

The enzyme catalyses (2R)-2-phosphoglycerate = (2R)-3-phosphoglycerate. It functions in the pathway carbohydrate degradation; glycolysis; pyruvate from D-glyceraldehyde 3-phosphate: step 3/5. Catalyzes the interconversion of 2-phosphoglycerate and 3-phosphoglycerate. This Mycobacterium marinum (strain ATCC BAA-535 / M) protein is 2,3-bisphosphoglycerate-dependent phosphoglycerate mutase.